The primary structure comprises 325 residues: Holliday junction branch migration complex subunit RuvB (325 aa).

The segment at M1–Y180 is large ATPase domain (RuvB-L). ATP is bound by residues L19, R20, G61, K64, T65, S66, E127–F129, R170, Y180, and R217. T65 serves as a coordination point for Mg(2+). The tract at residues S181 to G251 is small ATPAse domain (RuvB-S). The interval K254 to H325 is head domain (RuvB-H). DNA contacts are provided by R290, R309, and R314.

It belongs to the RuvB family. In terms of assembly, homohexamer. Forms an RuvA(8)-RuvB(12)-Holliday junction (HJ) complex. HJ DNA is sandwiched between 2 RuvA tetramers; dsDNA enters through RuvA and exits via RuvB. An RuvB hexamer assembles on each DNA strand where it exits the tetramer. Each RuvB hexamer is contacted by two RuvA subunits (via domain III) on 2 adjacent RuvB subunits; this complex drives branch migration. In the full resolvosome a probable DNA-RuvA(4)-RuvB(12)-RuvC(2) complex forms which resolves the HJ.

It is found in the cytoplasm. The enzyme catalyses ATP + H2O = ADP + phosphate + H(+). In terms of biological role, the RuvA-RuvB-RuvC complex processes Holliday junction (HJ) DNA during genetic recombination and DNA repair, while the RuvA-RuvB complex plays an important role in the rescue of blocked DNA replication forks via replication fork reversal (RFR). RuvA specifically binds to HJ cruciform DNA, conferring on it an open structure. The RuvB hexamer acts as an ATP-dependent pump, pulling dsDNA into and through the RuvAB complex. RuvB forms 2 homohexamers on either side of HJ DNA bound by 1 or 2 RuvA tetramers; 4 subunits per hexamer contact DNA at a time. Coordinated motions by a converter formed by DNA-disengaged RuvB subunits stimulates ATP hydrolysis and nucleotide exchange. Immobilization of the converter enables RuvB to convert the ATP-contained energy into a lever motion, pulling 2 nucleotides of DNA out of the RuvA tetramer per ATP hydrolyzed, thus driving DNA branch migration. The RuvB motors rotate together with the DNA substrate, which together with the progressing nucleotide cycle form the mechanistic basis for DNA recombination by continuous HJ branch migration. Branch migration allows RuvC to scan DNA until it finds its consensus sequence, where it cleaves and resolves cruciform DNA. This is Holliday junction branch migration complex subunit RuvB from Orientia tsutsugamushi (strain Boryong) (Rickettsia tsutsugamushi).